The following is a 321-amino-acid chain: Cytochrome f (321 aa).

The N-terminal stretch at 1-38 (MKKNFYTISKTMSRSLKLILFSVFIGFSIFLIPQPTWA) is a signal peptide. Residues Y39, C59, C62, and H63 each coordinate heme. Residues 288–308 (VIGMIIFFIGVGLSQIMLVLK) form a helical membrane-spanning segment.

It belongs to the cytochrome f family. As to quaternary structure, the 4 large subunits of the cytochrome b6-f complex are cytochrome b6, subunit IV (17 kDa polypeptide, PetD), cytochrome f and the Rieske protein, while the 4 small subunits are PetG, PetL, PetM and PetN. The complex functions as a dimer. Heme serves as cofactor.

It localises to the cellular thylakoid membrane. In terms of biological role, component of the cytochrome b6-f complex, which mediates electron transfer between photosystem II (PSII) and photosystem I (PSI), cyclic electron flow around PSI, and state transitions. This Prochlorococcus marinus (strain NATL1A) protein is Cytochrome f.